The sequence spans 392 residues: Succinyl-diaminopimelate desuccinylase (392 aa).

Residue His-78 coordinates Zn(2+). Asp-80 is a catalytic residue. Zn(2+) is bound at residue Asp-110. Glu-145 serves as the catalytic Proton acceptor. Glu-146, Glu-174, and His-363 together coordinate Zn(2+).

Belongs to the peptidase M20A family. DapE subfamily. As to quaternary structure, homodimer. Zn(2+) serves as cofactor. It depends on Co(2+) as a cofactor.

It catalyses the reaction N-succinyl-(2S,6S)-2,6-diaminopimelate + H2O = (2S,6S)-2,6-diaminopimelate + succinate. It functions in the pathway amino-acid biosynthesis; L-lysine biosynthesis via DAP pathway; LL-2,6-diaminopimelate from (S)-tetrahydrodipicolinate (succinylase route): step 3/3. Catalyzes the hydrolysis of N-succinyl-L,L-diaminopimelic acid (SDAP), forming succinate and LL-2,6-diaminopimelate (DAP), an intermediate involved in the bacterial biosynthesis of lysine and meso-diaminopimelic acid, an essential component of bacterial cell walls. The chain is Succinyl-diaminopimelate desuccinylase from Methylobacterium radiotolerans (strain ATCC 27329 / DSM 1819 / JCM 2831 / NBRC 15690 / NCIMB 10815 / 0-1).